We begin with the raw amino-acid sequence, 153 residues long: Nuclear cap-binding protein subunit 2 (153 aa).

MRNA is bound by residues Tyr-17, Tyr-40, 109–113, 120–124, and 130–131; these read RTDWD, RQYGR, and QV. The RRM domain maps to 37–115; the sequence is CTLYVGNLSF…RIVRTDWDAG (79 aa).

Belongs to the RRM NCBP2 family. Component of the nuclear cap-binding complex (CBC), a heterodimer composed of ncbp1/cbp80 and ncbp2/cbp20 that interacts with m7GpppG-capped RNA.

It localises to the nucleus. The protein localises to the cytoplasm. Its function is as follows. Component of the cap-binding complex (CBC), which binds co-transcriptionally to the 5' cap of pre-mRNAs and is involved in various processes such as pre-mRNA splicing, translation regulation, nonsense-mediated mRNA decay, RNA-mediated gene silencing (RNAi) by microRNAs (miRNAs) and mRNA export. The CBC complex is involved in mRNA export from the nucleus, leading to the recruitment of the mRNA export machinery to the 5' end of mRNA and to mRNA export in a 5' to 3' direction through the nuclear pore. The CBC complex is also involved in mediating U snRNA and intronless mRNAs export from the nucleus. The CBC complex is essential for a pioneer round of mRNA translation, before steady state translation when the CBC complex is replaced by cytoplasmic cap-binding protein eIF4E. The pioneer round of mRNA translation mediated by the CBC complex plays a central role in nonsense-mediated mRNA decay (NMD), NMD only taking place in mRNAs bound to the CBC complex, but not on eIF4E-bound mRNAs. The CBC complex enhances NMD in mRNAs containing at least one exon-junction complex (EJC), promoting the interaction between upf1 and upf2. The CBC complex is also involved in 'failsafe' NMD, which is independent of the EJC complex, while it does not participate in Staufen-mediated mRNA decay (SMD). During cell proliferation, the CBC complex is also involved in microRNAs (miRNAs) biogenesis via its interaction with srrt/ars2, thereby being required for miRNA-mediated RNA interference. The CBC complex also acts as a negative regulator of parn, thereby acting as an inhibitor of mRNA deadenylation. In the CBC complex, ncbp2/cbp20 recognizes and binds capped RNAs (m7GpppG-capped RNA) but requires ncbp1/cbp80 to stabilize the movement of its N-terminal loop and lock the CBC into a high affinity cap-binding state with the cap structure. The conventional cap-binding complex with NCBP2 binds both small nuclear RNA (snRNA) and messenger (mRNA) and is involved in their export from the nucleus. The protein is Nuclear cap-binding protein subunit 2 (ncbp2) of Xenopus laevis (African clawed frog).